Here is a 373-residue protein sequence, read N- to C-terminus: Ribosomal RNA small subunit methyltransferase H (373 aa).

S-adenosyl-L-methionine is bound by residues 92–94, D111, Y138, D159, and Q166; that span reads GGH. Composition is skewed to basic and acidic residues over residues 343-355 and 363-373; these read AERA…ERNP and RALEKVGGRGS. A disordered region spans residues 343-373; sequence AERADEQEIERNPRSAPVRLRALEKVGGRGS.

Belongs to the methyltransferase superfamily. RsmH family.

It is found in the cytoplasm. It carries out the reaction cytidine(1402) in 16S rRNA + S-adenosyl-L-methionine = N(4)-methylcytidine(1402) in 16S rRNA + S-adenosyl-L-homocysteine + H(+). Specifically methylates the N4 position of cytidine in position 1402 (C1402) of 16S rRNA. The sequence is that of Ribosomal RNA small subunit methyltransferase H from Mycolicibacterium smegmatis (strain ATCC 700084 / mc(2)155) (Mycobacterium smegmatis).